A 72-amino-acid chain; its full sequence is Translation initiation factor IF-1 (72 aa).

Positions 1-72 (MAKDDVIEVE…TRGRITYRFK (72 aa)) constitute an S1-like domain.

The protein belongs to the IF-1 family. As to quaternary structure, component of the 30S ribosomal translation pre-initiation complex which assembles on the 30S ribosome in the order IF-2 and IF-3, IF-1 and N-formylmethionyl-tRNA(fMet); mRNA recruitment can occur at any time during PIC assembly.

The protein resides in the cytoplasm. Its function is as follows. One of the essential components for the initiation of protein synthesis. Stabilizes the binding of IF-2 and IF-3 on the 30S subunit to which N-formylmethionyl-tRNA(fMet) subsequently binds. Helps modulate mRNA selection, yielding the 30S pre-initiation complex (PIC). Upon addition of the 50S ribosomal subunit IF-1, IF-2 and IF-3 are released leaving the mature 70S translation initiation complex. The sequence is that of Translation initiation factor IF-1 from Streptococcus gordonii (strain Challis / ATCC 35105 / BCRC 15272 / CH1 / DL1 / V288).